The following is a 587-amino-acid chain: MGSSKSKPKDPSQRRRSLEPPDSTHHGGFPASQTPNKTAAPDTHRTPSRSFGTVATEPKLFGGFNTSDTVTSPQRAGALAGGVTTFVALYDYESRTETDLSFKKGERLQIVNNTEGDWWLAHSLTTGQTGYIPSNYVAPSDSIQAEEWYFGKITRRESERLLLNPENPRGTFLVRESETTKGAYCLSVSDFDNAKGLNVKHYKIRKLDSGGFYITSRTQFSSLQQLVAYYSKHADGLCHRLTNVCPTSKPQTQGLAKDAWEIPRESLRLEVKLGQGCFGEVWMGTWNGTTRVAIKTLKPGTMSPEAFLQEAQVMKKLRHEKLVQLYAVVSEEPIYIVTEYMSKGSLLDFLKGEMGKYLRLPQLVDMAAQIASGMAYVERMNYVHRDLRAANILVGENLVCKVADFGLARLIEDNEYTARQGAKFPIKWTAPEAALYGRFTIKSDVWSFGILLTELTTKGRVPYPGMVNREVLDQVERGYRMPCPPECPESLHDLMCQCWRKDPEERPTFEYLQAFLEDYFTSTEPPVPAWREPIGLELLLAPEASLWGTGAWLRAEGPRFGEQPQSRMWHGEVSGAPSLIKTVLGHP.

Residues 1-58 form a disordered region; the sequence is MGSSKSKPKDPSQRRRSLEPPDSTHHGGFPASQTPNKTAAPDTHRTPSRSFGTVATEP. Gly2 is lipidated: N-myristoyl glycine; by host. Basic and acidic residues predominate over residues 7–25; the sequence is KPKDPSQRRRSLEPPDSTH. The SH3 domain maps to 81–142; that stretch reads GGVTTFVALY…PSNYVAPSDS (62 aa). Residues 148-245 form the SH2 domain; the sequence is WYFGKITRRE…GLCHRLTNVC (98 aa). Positions 267-520 constitute a Protein kinase domain; that stretch reads LRLEVKLGQG…YLQAFLEDYF (254 aa). Residues 273 to 281 and Lys295 contribute to the ATP site; that span reads LGQGCFGEV. Asp386 serves as the catalytic Proton acceptor. Tyr416 is modified (phosphotyrosine; by autocatalysis).

Belongs to the protein kinase superfamily. Tyr protein kinase family. SRC subfamily. In terms of processing, the phosphorylated form is termed pp60v-src.

The catalysed reaction is L-tyrosyl-[protein] + ATP = O-phospho-L-tyrosyl-[protein] + ADP + H(+). Functionally, this phosphoprotein, required for both the initiation and the maintenance of neoplastic transformation, is a protein kinase that catalyzes the phosphorylation of tyrosine residues in vitro. In Galliformes, this protein is Tyrosine-protein kinase transforming protein Src (V-SRC).